The primary structure comprises 67 residues: Conotoxin reg3.8 (67 aa).

An N-terminal signal peptide occupies residues 1–22 (MMSKLGVLLTICLLLFPLSVLP). A propeptide spanning residues 23–50 (LDGDQLADQPARHAQSAERNARFHPVKR) is cleaved from the precursor. Disulfide bonds link Cys-51/Cys-65, Cys-52/Cys-63, and Cys-57/Cys-66. The residue at position 66 (Cys-66) is a Cysteine amide.

It belongs to the conotoxin M superfamily. Expressed by the venom duct.

It localises to the secreted. This is Conotoxin reg3.8 from Conus regius (Crown cone).